We begin with the raw amino-acid sequence, 611 residues long: Leukotriene A-4 hydrolase (611 aa).

Lys73 is modified (N6-acetyllysine). Residues 135–137 (QCQ) and 267–272 (PYGGME) contribute to the a peptide site. His296 is a binding site for Zn(2+). Glu297 acts as the Proton acceptor in catalysis. Positions 300 and 319 each coordinate Zn(2+). N6-acetyllysine is present on Lys337. Residue Tyr384 is the Proton donor of the active site. A Phosphoserine modification is found at Ser416. An a peptide-binding site is contributed by 564–566 (RMK). Position 573 is an N6-acetyllysine (Lys573).

This sequence belongs to the peptidase M1 family. Zn(2+) serves as cofactor. Post-translationally, phosphorylation at Ser-416 inhibits enzymatic activity.

It is found in the cytoplasm. The catalysed reaction is leukotriene A4 + H2O = leukotriene B4. The protein operates within lipid metabolism; leukotriene B4 biosynthesis. Inhibited by bestatin. Subject to suicide inhibition by leukotriene A4. Its function is as follows. Epoxide hydrolase that catalyzes the final step in the biosynthesis of the pro-inflammatory mediator leukotriene B4. Also has aminopeptidase activity. The chain is Leukotriene A-4 hydrolase (LTA4H) from Chinchilla lanigera (Long-tailed chinchilla).